The sequence spans 278 residues: Urease accessory protein UreD (278 aa).

This sequence belongs to the UreD family. UreD, UreF and UreG form a complex that acts as a GTP-hydrolysis-dependent molecular chaperone, activating the urease apoprotein by helping to assemble the nickel containing metallocenter of UreC. The UreE protein probably delivers the nickel.

It localises to the cytoplasm. Required for maturation of urease via the functional incorporation of the urease nickel metallocenter. The chain is Urease accessory protein UreD from Pseudomonas putida (strain ATCC 700007 / DSM 6899 / JCM 31910 / BCRC 17059 / LMG 24140 / F1).